Reading from the N-terminus, the 215-residue chain is Probable glutathione S-transferase GSTF2 (215 aa).

One can recognise a GST N-terminal domain in the interval 2–83; the sequence is APMKLYGSTL…YVCRKNKPEL (82 aa). Residues Ser-12, 41 to 42, 54 to 55, and 67 to 68 contribute to the glutathione site; these read HK, QV, and ES. The 128-residue stretch at 88-215 folds into the GST C-terminal domain; the sequence is DLKESAMVDV…KVASLMKPPA (128 aa).

It belongs to the GST superfamily. Phi family. In terms of tissue distribution, constitutively expressed in roots. Expressed in anthers, callus, panicles, sheaths and stems (at protein level).

The catalysed reaction is RX + glutathione = an S-substituted glutathione + a halide anion + H(+). Functionally, conjugation of reduced glutathione to a wide number of exogenous and endogenous hydrophobic electrophiles. This Oryza sativa subsp. japonica (Rice) protein is Probable glutathione S-transferase GSTF2 (GSTF2).